A 453-amino-acid polypeptide reads, in one-letter code: MSVLLVGVSHRTAPVPVLERVAVTDTDRPKLIDKLLASSHISEAMIVSTCNRVEVYAVVDAFHGALTEVGEILADHSGLDLTALHAHAYVRYSEAAVEHLFAVASGLDSMVIGEQQILGQIRSAYASSDAQQAAGRVVHELAQQALRVGKRVHSETGIDSAGASVVSVALDRAAGIIGEGGLVGRTAVVVGAGSMGGLSVAHLTRAGIARIVVVNRTQERAEHLAETARSNGVDADGVAFDQLSAAMAQADVMVTCTGAVGAVVTLADVHRALAEPDRDNTKHLVICDLGLPRDIDPAVAGLPGVTVLDMETLQRDPAAGAAASDADAARTIVAGELATYLAGQRLAEVTPTVTALRQRAADVVEAELMRLDSRLPGLDDPQRDEVARTVRRVVDKLLHAPTVRVKQLASAPGGDSYAAALRELFELSPGSPAAVATPTDLVDGDRTGRDLQA.

Residues 49–52 (TCNR), serine 109, 114–116 (EQQ), and glutamine 120 contribute to the substrate site. Cysteine 50 acts as the Nucleophile in catalysis. Residue 191 to 196 (GAGSMG) participates in NADP(+) binding. A disordered region spans residues 432 to 453 (PAAVATPTDLVDGDRTGRDLQA). The span at 443–453 (DGDRTGRDLQA) shows a compositional bias: basic and acidic residues.

The protein belongs to the glutamyl-tRNA reductase family. As to quaternary structure, homodimer.

The catalysed reaction is (S)-4-amino-5-oxopentanoate + tRNA(Glu) + NADP(+) = L-glutamyl-tRNA(Glu) + NADPH + H(+). It participates in porphyrin-containing compound metabolism; protoporphyrin-IX biosynthesis; 5-aminolevulinate from L-glutamyl-tRNA(Glu): step 1/2. Catalyzes the NADPH-dependent reduction of glutamyl-tRNA(Glu) to glutamate 1-semialdehyde (GSA). The sequence is that of Glutamyl-tRNA reductase from Rhodococcus erythropolis (strain PR4 / NBRC 100887).